Consider the following 299-residue polypeptide: Taste receptor type 2 member 50 (299 aa).

Position 1 (Met1) is a topological domain, extracellular. The helical transmembrane segment at 2 to 22 threads the bilayer; the sequence is IPFLHIFFSVLILVLFVLGNF. Over 23 to 55 the chain is Cytoplasmic; that stretch reads ANGFIALVNFIDWVKRKKISLADQILTALAVSR. Residues 56–76 traverse the membrane as a helical segment; that stretch reads VGLLWALLLNWYLTELNPAFY. The Extracellular segment spans residues 77 to 87; it reads SVELRITSYNA. Residues 88–108 form a helical membrane-spanning segment; it reads WVVTNHFSMWLAASLSIFYLL. The Cytoplasmic segment spans residues 109–126; it reads KIANFSNLSFLNLKRRVR. Residues 127–147 traverse the membrane as a helical segment; the sequence is SIILVILLGSLLFLVCHLLAV. Residues 148–181 are Extracellular-facing; the sequence is NMDENMWTEEYEGNMTGKMKLRNAAHLSYMTVTT. An N-linked (GlcNAc...) asparagine glycan is attached at Asn161. The helical transmembrane segment at 182-202 threads the bilayer; it reads LWSFIPFMLSLISFLMLIFSL. Topologically, residues 203 to 229 are cytoplasmic; sequence CKHLKKMQLHGEGSRDPSTTVHIKALQ. A helical membrane pass occupies residues 230-250; that stretch reads TLISFLLLCAIFFLFLIISVW. Residues 251–259 are Extracellular-facing; it reads SPRRLQNEP. The helical transmembrane segment at 260–280 threads the bilayer; the sequence is VFMVCKAVGNIYLSFDSFVLI. At 281–299 the chain is on the cytoplasmic side; sequence WRTKKLKHIFLLILCQIRC.

Belongs to the G-protein coupled receptor T2R family.

It is found in the membrane. Receptor that may play a role in the perception of bitterness and is gustducin-linked. May play a role in sensing the chemical composition of the gastrointestinal content. The activity of this receptor may stimulate alpha gustducin, mediate PLC-beta-2 activation and lead to the gating of TRPM5. This Macaca mulatta (Rhesus macaque) protein is Taste receptor type 2 member 50 (TAS2R50).